The sequence spans 275 residues: Large ribosomal subunit protein uL2 (275 aa).

The tract at residues 212-259 is disordered; that stretch reads RWKGIRPTNRGVTMNPVDHPHGGGEGKTSGGRHPVTPWGQPTRGYKTR.

The protein belongs to the universal ribosomal protein uL2 family. In terms of assembly, part of the 50S ribosomal subunit. Forms a bridge to the 30S subunit in the 70S ribosome.

In terms of biological role, one of the primary rRNA binding proteins. Required for association of the 30S and 50S subunits to form the 70S ribosome, for tRNA binding and peptide bond formation. It has been suggested to have peptidyltransferase activity; this is somewhat controversial. Makes several contacts with the 16S rRNA in the 70S ribosome. The sequence is that of Large ribosomal subunit protein uL2 from Acidobacterium capsulatum (strain ATCC 51196 / DSM 11244 / BCRC 80197 / JCM 7670 / NBRC 15755 / NCIMB 13165 / 161).